The following is a 231-amino-acid chain: dTTP/UTP pyrophosphatase (231 aa).

Asp81 (proton acceptor) is an active-site residue.

This sequence belongs to the Maf family. YhdE subfamily. The cofactor is a divalent metal cation.

It is found in the cytoplasm. It carries out the reaction dTTP + H2O = dTMP + diphosphate + H(+). The enzyme catalyses UTP + H2O = UMP + diphosphate + H(+). In terms of biological role, nucleoside triphosphate pyrophosphatase that hydrolyzes dTTP and UTP. May have a dual role in cell division arrest and in preventing the incorporation of modified nucleotides into cellular nucleic acids. The protein is dTTP/UTP pyrophosphatase of Lawsonia intracellularis (strain PHE/MN1-00).